Here is a 271-residue protein sequence, read N- to C-terminus: Dehydrodolichyl diphosphate synthase 7 (271 aa).

The chain crosses the membrane as a helical span at residues 24–41 (FLFRVLCVGPIPTNISFI).

It belongs to the UPP synthase family. The cofactor is Mg(2+).

Its subcellular location is the endoplasmic reticulum membrane. Its pathway is protein modification; protein glycosylation. In terms of biological role, catalyzes cis-prenyl chain elongation to produce the polyprenyl backbone of dolichol, a glycosyl carrier-lipid required for the biosynthesis of several classes of glycoprotein. The chain is Dehydrodolichyl diphosphate synthase 7 from Arabidopsis thaliana (Mouse-ear cress).